The following is a 256-amino-acid chain: 5-keto-4-deoxy-D-glucarate aldolase (256 aa).

The active-site Proton acceptor is the His50. Gln151 is a binding site for substrate. Glu153 contacts Mg(2+). Residues Ser178 and Asp179 each contribute to the substrate site. Position 179 (Asp179) interacts with Mg(2+).

It belongs to the HpcH/HpaI aldolase family. KDGluc aldolase subfamily. Homohexamer; trimer of dimers. The cofactor is Mg(2+).

The catalysed reaction is 5-dehydro-4-deoxy-D-glucarate = 2-hydroxy-3-oxopropanoate + pyruvate. The enzyme catalyses 2-dehydro-3-deoxy-D-glucarate = 2-hydroxy-3-oxopropanoate + pyruvate. Its pathway is carbohydrate acid metabolism; galactarate degradation; D-glycerate from galactarate: step 2/3. Its function is as follows. Catalyzes the reversible retro-aldol cleavage of both 5-keto-4-deoxy-D-glucarate and 2-keto-3-deoxy-D-glucarate to pyruvate and tartronic semialdehyde. The polypeptide is 5-keto-4-deoxy-D-glucarate aldolase (Salmonella arizonae (strain ATCC BAA-731 / CDC346-86 / RSK2980)).